The primary structure comprises 518 residues: 2-isopropylmalate synthase (518 aa).

The Pyruvate carboxyltransferase domain maps to I5–H268. 4 residues coordinate Mn(2+): D14, H202, H204, and N238. The interval T393–V518 is regulatory domain.

Belongs to the alpha-IPM synthase/homocitrate synthase family. LeuA type 1 subfamily. As to quaternary structure, homodimer. It depends on Mn(2+) as a cofactor.

It is found in the cytoplasm. The catalysed reaction is 3-methyl-2-oxobutanoate + acetyl-CoA + H2O = (2S)-2-isopropylmalate + CoA + H(+). Its pathway is amino-acid biosynthesis; L-leucine biosynthesis; L-leucine from 3-methyl-2-oxobutanoate: step 1/4. Functionally, catalyzes the condensation of the acetyl group of acetyl-CoA with 3-methyl-2-oxobutanoate (2-ketoisovalerate) to form 3-carboxy-3-hydroxy-4-methylpentanoate (2-isopropylmalate). This is 2-isopropylmalate synthase from Pasteurella multocida (strain Pm70).